The following is a 160-amino-acid chain: 3-hydroxyacyl-[acyl-carrier-protein] dehydratase FabZ (160 aa).

Residue His-59 is part of the active site.

Belongs to the thioester dehydratase family. FabZ subfamily.

The protein resides in the cytoplasm. The catalysed reaction is a (3R)-hydroxyacyl-[ACP] = a (2E)-enoyl-[ACP] + H2O. Functionally, involved in unsaturated fatty acids biosynthesis. Catalyzes the dehydration of short chain beta-hydroxyacyl-ACPs and long chain saturated and unsaturated beta-hydroxyacyl-ACPs. This is 3-hydroxyacyl-[acyl-carrier-protein] dehydratase FabZ from Burkholderia thailandensis (strain ATCC 700388 / DSM 13276 / CCUG 48851 / CIP 106301 / E264).